The sequence spans 488 residues: SAGA complex subunit HFI1 (488 aa).

Disordered regions lie at residues 1–58 (MSAI…QGPN) and 352–383 (QLDDDKNEDECADEAKSINNGNNSSKDDIGDI). Residues 37–58 (AVSNHTEPNNGNNETAEPQGPN) show a composition bias toward polar residues.

As to quaternary structure, component of the 1.8 MDa SAGA (Spt-Ada-Gcn5 acetyltransferase) complex, which is composed of 19 subunits TRA1, SPT7, TAF5, NGG1/ADA3, SGF73, SPT20/ADA5, SPT8, TAF12, TAF6, HFI1/ADA1, UBP8, GCN5, ADA2, SPT3, SGF29, TAF10, TAF9, SGF11 and SUS1. The SAGA complex is composed of 4 modules, namely the HAT (histone acetyltransferase) module (GCN5, ADA2, NGG1/ADA3 and SGF29), the DUB (deubiquitinating) module (UBP8, SGF11, SGF73 and SUS1), the core or TAF (TBP-associated factor) module (TAF5, TAF6, TAF9, TAF10 and TAF12), and the Tra1 or SPT (Suppressor of Ty) module (TRA1, HFI1/ADA1, SPT3, SPT7, SPT8 and SPT20/ADA5). The Tra1/SPT module binds activators, the core module recruits TBP (TATA-binding protein), the HAT module contains the histone H3 acetyltransferase GCN5, and the DUB module comprises the histone H2B deubiquitinase UBP8. Also identified in an altered form of SAGA, named SALSA (SAGA altered, Spt8 absent) or SLIK (SAGA-like) complex, which contains a C-terminal truncated form of SPT7 and is missing SPT8. However, it has been shown that the SAGA and SAGA-like SALSA/SLIK transcriptional coactivators are structurally and biochemically equivalent. Component of an ADA/GCN5 complex that consists of HFI1/ADA1, ADA2, NGG1/ADA3, SPT20/ADA5 and GCN5 and probably is a subcomplex of SAGA.

Its subcellular location is the nucleus. Functionally, component of the transcription coactivator SAGA complex. SAGA acts as a general cofactor required for essentially all RNA polymerase II transcription. At the promoters, SAGA is required for transcription pre-initiation complex (PIC) recruitment. It influences RNA polymerase II transcriptional activity through different activities such as TBP interaction (via core/TAF module) and promoter selectivity, interaction with transcription activators (via Tra1/SPT module), and chromatin modification through histone acetylation (via HAT module) and deubiquitination (via DUB module). SAGA preferentially acetylates histones H3 (to form H3K9ac, H3K14ac, H3K18ac and H3K23ac) and H2B and deubiquitinates histone H2B. SAGA interacts with DNA via upstream activating sequences (UASs). Also identified in a modified version of SAGA named SALSA or SLIK. The cleavage of SPT7 and the absence of the SPT8 subunit in SLIK neither drive any major conformational differences in its structure compared with SAGA, nor significantly affect HAT, DUB, or DNA-binding activities. The chain is SAGA complex subunit HFI1 (HFI1) from Saccharomyces cerevisiae (strain ATCC 204508 / S288c) (Baker's yeast).